Here is a 216-residue protein sequence, read N- to C-terminus: uncharacterized protein (216 aa).

The region spanning 1–216 (MVVKIVEAYE…DVTFLKLKLK (216 aa)) is the N-acetyltransferase domain.

This sequence belongs to the acetyltransferase family.

This is an uncharacterized protein from Dictyostelium discoideum (Social amoeba).